The primary structure comprises 236 residues: Large ribosomal subunit protein uL1 (236 aa).

It belongs to the universal ribosomal protein uL1 family. Part of the 50S ribosomal subunit.

Functionally, binds directly to 23S rRNA. The L1 stalk is quite mobile in the ribosome, and is involved in E site tRNA release. Protein L1 is also a translational repressor protein, it controls the translation of the L11 operon by binding to its mRNA. This is Large ribosomal subunit protein uL1 from Acidobacterium capsulatum (strain ATCC 51196 / DSM 11244 / BCRC 80197 / JCM 7670 / NBRC 15755 / NCIMB 13165 / 161).